The sequence spans 172 residues: Methylated-DNA--protein-cysteine methyltransferase (172 aa).

Residue C142 is the Nucleophile; methyl group acceptor of the active site.

Belongs to the MGMT family.

The protein resides in the cytoplasm. It carries out the reaction a 6-O-methyl-2'-deoxyguanosine in DNA + L-cysteinyl-[protein] = S-methyl-L-cysteinyl-[protein] + a 2'-deoxyguanosine in DNA. The enzyme catalyses a 4-O-methyl-thymidine in DNA + L-cysteinyl-[protein] = a thymidine in DNA + S-methyl-L-cysteinyl-[protein]. Its function is as follows. Involved in the cellular defense against the biological effects of O6-methylguanine (O6-MeG) and O4-methylthymine (O4-MeT) in DNA. Repairs the methylated nucleobase in DNA by stoichiometrically transferring the methyl group to a cysteine residue in the enzyme. This is a suicide reaction: the enzyme is irreversibly inactivated. This Pyrococcus abyssi (strain GE5 / Orsay) protein is Methylated-DNA--protein-cysteine methyltransferase.